A 65-amino-acid polypeptide reads, in one-letter code: Large ribosomal subunit protein bL35 (65 aa).

The tract at residues 1–30 is disordered; sequence MPKMKTNRGAAKRFRKTASGRFKSKQSHLR. Over residues 10-30 the composition is skewed to basic residues; that stretch reads AAKRFRKTASGRFKSKQSHLR.

The protein belongs to the bacterial ribosomal protein bL35 family.

The chain is Large ribosomal subunit protein bL35 from Pseudoalteromonas atlantica (strain T6c / ATCC BAA-1087).